Reading from the N-terminus, the 528-residue chain is Peptide chain release factor 3 (528 aa).

The region spanning 11–279 (EKRRTFAIIS…GLVEWAPKPL (269 aa)) is the tr-type G domain. GTP is bound by residues 20–27 (SHPDAGKT), 88–92 (DTPGH), and 142–145 (NKCD).

It belongs to the TRAFAC class translation factor GTPase superfamily. Classic translation factor GTPase family. PrfC subfamily.

Its subcellular location is the cytoplasm. In terms of biological role, increases the formation of ribosomal termination complexes and stimulates activities of RF-1 and RF-2. It binds guanine nucleotides and has strong preference for UGA stop codons. It may interact directly with the ribosome. The stimulation of RF-1 and RF-2 is significantly reduced by GTP and GDP, but not by GMP. The chain is Peptide chain release factor 3 from Psychromonas ingrahamii (strain DSM 17664 / CCUG 51855 / 37).